A 506-amino-acid chain; its full sequence is Maturase K (506 aa).

This sequence belongs to the intron maturase 2 family. MatK subfamily.

It localises to the plastid. The protein resides in the chloroplast. Its function is as follows. Usually encoded in the trnK tRNA gene intron. Probably assists in splicing its own and other chloroplast group II introns. In Erica tetralix (Cross-leaved heath), this protein is Maturase K.